Consider the following 95-residue polypeptide: IgNAR transmembrane form NE (95 aa).

In terms of domain architecture, Ig-like spans 1–36; the sequence is LTFSTRSLLNLPAVEWKSGAKYTCTASHSPSQSTVK. Over residues 24 to 35 the composition is skewed to polar residues; sequence CTASHSPSQSTV. Residues 24–79 form a disordered region; that stretch reads CTASHSPSQSTVKRVIRNPKESPKGSSETRKSPLEIMESPEDYGTEEDQLENVNED. Residues 41-56 show a composition bias toward basic and acidic residues; the sequence is NPKESPKGSSETRKSP. Positions 61–77 are enriched in acidic residues; sequence ESPEDYGTEEDQLENVN. The N-linked (GlcNAc...) asparagine glycan is linked to asparagine 81.

Expressed mainly in lymphoid tissues including spleen, epigonal organ and circulating lymphocytes. Also expressed at low levels in the pancreas.

The protein is IgNAR transmembrane form NE of Ginglymostoma cirratum (Nurse shark).